The chain runs to 62 residues: Photosystem II reaction center protein Z (62 aa).

2 helical membrane passes run 8–28 (AVFALIATSSILLIGVPVVFA) and 41–61 (FSGTSLWIGLVFLVGILNSLI).

The protein belongs to the PsbZ family. As to quaternary structure, PSII is composed of 1 copy each of membrane proteins PsbA, PsbB, PsbC, PsbD, PsbE, PsbF, PsbH, PsbI, PsbJ, PsbK, PsbL, PsbM, PsbT, PsbY, PsbZ, Psb30/Ycf12, at least 3 peripheral proteins of the oxygen-evolving complex and a large number of cofactors. It forms dimeric complexes.

The protein resides in the plastid. Its subcellular location is the chloroplast thylakoid membrane. In terms of biological role, may control the interaction of photosystem II (PSII) cores with the light-harvesting antenna, regulates electron flow through the 2 photosystem reaction centers. PSII is a light-driven water plastoquinone oxidoreductase, using light energy to abstract electrons from H(2)O, generating a proton gradient subsequently used for ATP formation. The polypeptide is Photosystem II reaction center protein Z (Panax ginseng (Korean ginseng)).